The sequence spans 180 residues: Bifunctional protein PyrR (180 aa).

Residues 39–40 (TR), 103–111 (DDVLYTGRT), and R136 contribute to the substrate site. A PRPP-binding motif is present at residues 99 to 111 (VILIDDVLYTGRT).

It belongs to the purine/pyrimidine phosphoribosyltransferase family. PyrR subfamily. Homodimer and homohexamer; in equilibrium.

The enzyme catalyses UMP + diphosphate = 5-phospho-alpha-D-ribose 1-diphosphate + uracil. Regulates transcriptional attenuation of the pyrimidine nucleotide (pyr) operon by binding in a uridine-dependent manner to specific sites on pyr mRNA. This disrupts an antiterminator hairpin in the RNA and favors formation of a downstream transcription terminator, leading to a reduced expression of downstream genes. Its function is as follows. Also displays a weak uracil phosphoribosyltransferase activity which is not physiologically significant. This Halalkalibacterium halodurans (strain ATCC BAA-125 / DSM 18197 / FERM 7344 / JCM 9153 / C-125) (Bacillus halodurans) protein is Bifunctional protein PyrR.